The sequence spans 475 residues: UDP-glycosyltransferase 76E1 (475 aa).

The Proton acceptor role is filled by histidine 19. Histidine 19 serves as a coordination point for an anthocyanidin. Residue aspartate 109 is the Charge relay of the active site. UDP-alpha-D-glucose-binding residues include threonine 131, alanine 329, glutamine 331, histidine 346, tryptophan 349, asparagine 350, serine 351, and glutamate 354. Alanine 369 contributes to the an anthocyanidin binding site. 2 residues coordinate UDP-alpha-D-glucose: aspartate 370 and glutamine 371.

The protein belongs to the UDP-glycosyltransferase family. Expressed in flowers and fruits.

It is found in the cytoplasm. It localises to the nucleus. The enzyme catalyses 2-cis-(+)-abscisate + UDP-alpha-D-glucose = beta-D-glucopyranosyl cis-(+)-abscisate + UDP. Functionally, glucosyltransferase acting on abscisic acid (ABA) but not on auxin (IAA). The chain is UDP-glycosyltransferase 76E1 from Solanum lycopersicum (Tomato).